Here is a 272-residue protein sequence, read N- to C-terminus: HMP-PP phosphatase (272 aa).

Aspartate 8 (nucleophile) is an active-site residue. Positions 8, 10, and 212 each coordinate Mg(2+).

Belongs to the HAD-like hydrolase superfamily. Cof family. It depends on Mg(2+) as a cofactor.

It carries out the reaction 4-amino-2-methyl-5-(diphosphooxymethyl)pyrimidine + H2O = 4-amino-2-methyl-5-(phosphooxymethyl)pyrimidine + phosphate + H(+). Its function is as follows. Catalyzes the hydrolysis of 4-amino-2-methyl-5-hydroxymethylpyrimidine pyrophosphate (HMP-PP) to 4-amino-2-methyl-5-hydroxymethylpyrimidine phosphate (HMP-P). The chain is HMP-PP phosphatase from Salmonella agona (strain SL483).